The sequence spans 368 residues: tRNA-specific 2-thiouridylase MnmA (368 aa).

ATP is bound by residues 11 to 18 (GMSGGVDS) and Met37. The segment at 97 to 99 (NPD) is interaction with target base in tRNA. Catalysis depends on Cys102, which acts as the Nucleophile. A disulfide bridge links Cys102 with Cys199. Gly127 provides a ligand contact to ATP. The tract at residues 149 to 151 (KDQ) is interaction with tRNA. Residue Cys199 is the Cysteine persulfide intermediate of the active site. Positions 311-312 (RY) are interaction with tRNA.

This sequence belongs to the MnmA/TRMU family. Interacts with TusE.

It localises to the cytoplasm. It catalyses the reaction S-sulfanyl-L-cysteinyl-[protein] + uridine(34) in tRNA + AH2 + ATP = 2-thiouridine(34) in tRNA + L-cysteinyl-[protein] + A + AMP + diphosphate + H(+). Its function is as follows. Catalyzes the 2-thiolation of uridine at the wobble position (U34) of tRNA(Lys), tRNA(Glu) and tRNA(Gln), leading to the formation of s(2)U34, the first step of tRNA-mnm(5)s(2)U34 synthesis. Sulfur is provided by IscS, via a sulfur-relay system. Binds ATP and its substrate tRNAs. The sequence is that of tRNA-specific 2-thiouridylase MnmA from Salmonella arizonae (strain ATCC BAA-731 / CDC346-86 / RSK2980).